Reading from the N-terminus, the 584-residue chain is Potassium-transporting ATPase potassium-binding subunit (584 aa).

A run of 10 helical transmembrane segments spans residues 8-28 (FLVL…EFMF), 65-85 (SFAV…FILQ), 139-159 (VQNF…IYGF), 172-192 (VLLL…ALVL), 262-282 (FTDL…CFMF), 292-312 (GIAI…LGIW), 398-418 (GLYC…LMVG), 440-460 (ILIP…ITAG), 507-527 (MFVG…AFVA), and 544-564 (LFII…FLPA).

The protein belongs to the KdpA family. In terms of assembly, the system is composed of three essential subunits: KdpA, KdpB and KdpC.

It is found in the cell membrane. Functionally, part of the high-affinity ATP-driven potassium transport (or Kdp) system, which catalyzes the hydrolysis of ATP coupled with the electrogenic transport of potassium into the cytoplasm. This subunit binds the extracellular potassium ions and delivers the ions to the membrane domain of KdpB through an intramembrane tunnel. This is Potassium-transporting ATPase potassium-binding subunit from Methanoregula boonei (strain DSM 21154 / JCM 14090 / 6A8).